Consider the following 405-residue polypeptide: Cytoplasmic 60S subunit biogenesis factor ZNF622 (405 aa).

2 U1-type zinc fingers span residues 4–28 (YTCI…TDWH) and 67–91 (TYCT…SKKH). A disordered region spans residues 135–230 (AIRAQPSSSP…GVEEEEEKQA (96 aa)). The span at 194 to 228 (AEEEEDSEEGWEEMDSDEDLGSEEEMEGVEEEEEK) shows a compositional bias: acidic residues.

This sequence belongs to the REI1 family. Homo- and heterodimer. Associates with pre-60S ribosomal particles. Mainly expressed in the ovary. In terms of tissue distribution, mainly expressed in the testis.

The protein resides in the cytoplasm. The protein localises to the nucleus. Pre-60S-associated cytoplasmic factor involved in the cytoplasmic maturation of the 60S subunit. The sequence is that of Cytoplasmic 60S subunit biogenesis factor ZNF622 (ZNF622) from Gallus gallus (Chicken).